The sequence spans 405 residues: Tyrosine--tRNA ligase (405 aa).

Residues 48 to 57 (PSRPDLHLGH) carry the 'HIGH' region motif. Positions 232 to 236 (KMSKS) match the 'KMSKS' region motif. Residue lysine 235 participates in ATP binding. The S4 RNA-binding domain occupies 339 to 400 (LPLVDLLTTL…AGKRKFFRIA (62 aa)).

The protein belongs to the class-I aminoacyl-tRNA synthetase family. TyrS type 2 subfamily. In terms of assembly, homodimer.

It is found in the cytoplasm. It carries out the reaction tRNA(Tyr) + L-tyrosine + ATP = L-tyrosyl-tRNA(Tyr) + AMP + diphosphate + H(+). Catalyzes the attachment of tyrosine to tRNA(Tyr) in a two-step reaction: tyrosine is first activated by ATP to form Tyr-AMP and then transferred to the acceptor end of tRNA(Tyr). This chain is Tyrosine--tRNA ligase, found in Chlorobium luteolum (strain DSM 273 / BCRC 81028 / 2530) (Pelodictyon luteolum).